We begin with the raw amino-acid sequence, 407 residues long: Substance-P receptor (407 aa).

At methionine 1–glutamine 31 the chain is on the extracellular side. N-linked (GlcNAc...) asparagine glycans are attached at residues asparagine 14 and asparagine 18. Residues isoleucine 32–methionine 54 form a helical membrane-spanning segment. The Cytoplasmic portion of the chain corresponds to tryptophan 55–arginine 64. A helical transmembrane segment spans residues threonine 65 to threonine 86. The Extracellular segment spans residues valine 87–lysine 106. Asparagine 89 carries N-linked (GlcNAc...) asparagine glycosylation. A disulfide bridge links cysteine 105 with cysteine 180. A helical membrane pass occupies residues phenylalanine 107 to phenylalanine 128. The Cytoplasmic segment spans residues aspartate 129–lysine 148. A helical transmembrane segment spans residues valine 149–serine 169. The Extracellular segment spans residues threonine 170–lysine 194. A glycan (N-linked (GlcNAc...) asparagine) is linked at asparagine 189. Residues alanine 195–valine 219 form a helical membrane-spanning segment. Over glycine 220 to lysine 248 the chain is Cytoplasmic. A helical membrane pass occupies residues methionine 249–leucine 270. The Extracellular segment spans residues proline 271–isoleucine 283. Residues glutamine 284 to leucine 308 form a helical membrane-spanning segment. Residues asparagine 309–alanine 407 are Cytoplasmic-facing. Cysteine 322 carries S-palmitoyl cysteine lipidation. The disordered stretch occupies residues histidine 365–alanine 407. Positions threonine 376–alanine 407 are enriched in polar residues.

It belongs to the G-protein coupled receptor 1 family. In terms of assembly, interacts with ARRB1.

Its subcellular location is the cell membrane. This is a receptor for the tachykinin neuropeptide substance P. It is probably associated with G proteins that activate a phosphatidylinositol-calcium second messenger system. The polypeptide is Substance-P receptor (TACR1) (Meriones unguiculatus (Mongolian jird)).